The primary structure comprises 413 residues: uncharacterized protein (413 aa).

Helical transmembrane passes span 22–42 (VLLVSILSKIGISISIFTLIL), 270–290 (IIYVTLFLIIIISCFSVISIC), 312–332 (ILIQLIFFYYGMRFIIIGNLI), and 379–399 (LIIIFISTLTIGIVANWYPIY).

This sequence belongs to the ABC-4 integral membrane protein family. LolC/E subfamily.

Its subcellular location is the cell membrane. This is an uncharacterized protein from Buchnera aphidicola subsp. Schizaphis graminum (strain Sg).